A 56-amino-acid polypeptide reads, in one-letter code: Large ribosomal subunit protein bL33 (56 aa).

The protein belongs to the bacterial ribosomal protein bL33 family.

The protein is Large ribosomal subunit protein bL33 of Delftia acidovorans (strain DSM 14801 / SPH-1).